A 209-amino-acid chain; its full sequence is Small ribosomal subunit protein uS3 (209 aa).

The KH type-2 domain maps to 17-86 (IDEFLEKELR…NPQIEVEEIK (70 aa)).

It belongs to the universal ribosomal protein uS3 family. Part of the 30S ribosomal subunit.

Binds the lower part of the 30S subunit head. This chain is Small ribosomal subunit protein uS3, found in Thermococcus kodakarensis (strain ATCC BAA-918 / JCM 12380 / KOD1) (Pyrococcus kodakaraensis (strain KOD1)).